The sequence spans 506 residues: 2,3-bisphosphoglycerate-independent phosphoglycerate mutase (506 aa).

Mn(2+) contacts are provided by Asp-12 and Ser-63. Catalysis depends on Ser-63, which acts as the Phosphoserine intermediate. Substrate contacts are provided by residues His-122, 151–152 (RD), Arg-182, Arg-188, 253–256 (RADR), and Lys-323. The Mn(2+) site is built by Asp-390, His-394, Asp-432, His-433, and His-451.

The protein belongs to the BPG-independent phosphoglycerate mutase family. In terms of assembly, monomer. Mn(2+) serves as cofactor.

The enzyme catalyses (2R)-2-phosphoglycerate = (2R)-3-phosphoglycerate. It participates in carbohydrate degradation; glycolysis; pyruvate from D-glyceraldehyde 3-phosphate: step 3/5. Catalyzes the interconversion of 2-phosphoglycerate and 3-phosphoglycerate. The chain is 2,3-bisphosphoglycerate-independent phosphoglycerate mutase from Wolbachia pipientis wMel.